Consider the following 175-residue polypeptide: Large ribosomal subunit protein uL10 (175 aa).

It belongs to the universal ribosomal protein uL10 family. As to quaternary structure, part of the ribosomal stalk of the 50S ribosomal subunit. The N-terminus interacts with L11 and the large rRNA to form the base of the stalk. The C-terminus forms an elongated spine to which L12 dimers bind in a sequential fashion forming a multimeric L10(L12)X complex.

In terms of biological role, forms part of the ribosomal stalk, playing a central role in the interaction of the ribosome with GTP-bound translation factors. The sequence is that of Large ribosomal subunit protein uL10 from Xylella fastidiosa (strain M23).